A 421-amino-acid chain; its full sequence is 4'-demethylrebeccamycin synthase (421 aa).

It belongs to the glycosyltransferase 28 family.

It carries out the reaction 4'-demethylrebeccamycin + H2O = dichloroarcyriaflavin A + beta-D-glucose. It functions in the pathway alkaloid biosynthesis. Functionally, catalyzes the penultimate step in the biosynthesis of rebeccamycin, an indolocarbazole alkaloid that inhibits topoisomerase 1. Has a wide substrate range, including staurosporine aglycone, EJG-III-108A, J-104303, 6-N-methyl-arcyriaflavin and indolo-[2,3-a]-carbazole. The polypeptide is 4'-demethylrebeccamycin synthase (rebG) (Lentzea aerocolonigenes (Lechevalieria aerocolonigenes)).